We begin with the raw amino-acid sequence, 274 residues long: Coiled-coil domain-containing protein 28A (274 aa).

The interval 121-166 (VSKSTGFSNPASQSTSQRPKLKRVMKEKTKPQGGEGKGAQSTPIQH) is disordered. Over residues 122 to 138 (SKSTGFSNPASQSTSQR) the composition is skewed to polar residues. The stretch at 234 to 263 (KRKTASDSNLDRLLSDLEELNSSIQKLHLA) forms a coiled coil.

In Homo sapiens (Human), this protein is Coiled-coil domain-containing protein 28A (CCDC28A).